Consider the following 344-residue polypeptide: L-rhamnose-proton symporter (344 aa).

Helical transmembrane passes span 4–24, 38–58, 72–92, 101–121, 137–157, 175–195, 214–234, 259–279, 290–310, and 321–341; these read AITM…CFYA, WSVG…AILL, TLLP…NYGL, MGIG…TPIL, TLLG…AGQL, LVLA…MNAA, LPSY…FCFI, VLLS…YAWG, MSWM…GLVL, and VGVL…VGLG.

The protein belongs to the L-rhamnose transporter (TC 2.A.7.6) family.

Its subcellular location is the cell inner membrane. It catalyses the reaction L-rhamnopyranose(in) + H(+)(in) = L-rhamnopyranose(out) + H(+)(out). In terms of biological role, uptake of L-rhamnose across the cytoplasmic membrane with the concomitant transport of protons into the cell (symport system). The sequence is that of L-rhamnose-proton symporter from Enterobacter sp. (strain 638).